The chain runs to 767 residues: GPI ethanolamine phosphate transferase 2 (767 aa).

Residues Asn186 and Asn401 are each glycosylated (N-linked (GlcNAc...) asparagine). The next 2 helical transmembrane spans lie at 407-427 and 434-454; these read LGLF…YGLG and VTFL…SSYV. Asn490 carries N-linked (GlcNAc...) asparagine glycosylation. 3 helical membrane-spanning segments follow: residues 513-533, 538-558, and 595-615; these read ILWA…CLNS, IWRS…LVFV, and IPIF…KMSA. N-linked (GlcNAc...) asparagine glycosylation is present at Asn627. The next 3 membrane-spanning stretches (helical) occupy residues 655–675, 695–715, and 733–755; these read SVVL…IWWA, TLLT…CTML, and LAWT…SQVL.

It belongs to the PIGG/PIGN/PIGO family. PIGG subfamily.

The protein resides in the endoplasmic reticulum membrane. The protein operates within glycolipid biosynthesis; glycosylphosphatidylinositol-anchor biosynthesis. In terms of biological role, ethanolamine phosphate transferase involved in glycosylphosphatidylinositol-anchor biosynthesis. Transfers ethanolamine phosphate to the GPI second mannose. This chain is GPI ethanolamine phosphate transferase 2 (las21), found in Aspergillus fumigatus (strain ATCC MYA-4609 / CBS 101355 / FGSC A1100 / Af293) (Neosartorya fumigata).